The sequence spans 60 residues: Large ribosomal subunit protein uL30 (60 aa).

It belongs to the universal ribosomal protein uL30 family. As to quaternary structure, part of the 50S ribosomal subunit.

The chain is Large ribosomal subunit protein uL30 from Streptococcus equi subsp. equi (strain 4047).